The following is a 255-amino-acid chain: 14-3-3 protein 5 (255 aa).

Belongs to the 14-3-3 family. Homodimer.

The protein is 14-3-3 protein 5 (TFT5) of Solanum lycopersicum (Tomato).